A 542-amino-acid polypeptide reads, in one-letter code: TOM1-like protein 7 (542 aa).

The 130-residue stretch at 29-158 (ATSELLRTPD…ELKRCGVKFP (130 aa)) folds into the VHS domain. A Phosphoserine modification is found at serine 161. Residues 201 to 289 (EIESLSLSSL…VLARHDAIAS (89 aa)) enclose the GAT domain. The disordered stretch occupies residues 303-340 (RETSSSLKTCGAAALESADSESSSSSSSSESETDEVED). Positions 314–332 (AAALESADSESSSSSSSSE) are enriched in low complexity. Serine 521 bears the Phosphoserine mark. The disordered stretch occupies residues 522-542 (FPARATGTSGAATAATVDRQP). Residues 524 to 542 (ARATGTSGAATAATVDRQP) are compositionally biased toward low complexity.

The protein belongs to the TOM1 family. As to expression, preferentially expressed in flowers.

It is found in the membrane. Functionally, might contribute to the loading of the ESCRT machinery. This is TOM1-like protein 7 from Arabidopsis thaliana (Mouse-ear cress).